A 736-amino-acid polypeptide reads, in one-letter code: Transcription regulator protein BACH1 (736 aa).

Positions 34-100 (CDVTIFVEGQ…AYTAKLILSK (67 aa)) constitute a BTB domain. Ser-196 is subject to Phosphoserine. The segment covering 286–295 (MEPEETKKDP) has biased composition (basic and acidic residues). Disordered stretches follow at residues 286–312 (MEPE…FPHN) and 349–389 (KPLS…RSSV). A phosphoserine mark is found at Ser-364 and Ser-445. The bZIP domain maps to 557 to 620 (CIHDIRRRSK…GETKQNLTGL (64 aa)). The segment at 562 to 578 (RRRSKNRIAAQRCRKRK) is basic motif. A leucine-zipper region spans residues 582–589 (IQNLESEI). Residues 680 to 719 (LPPCARGNSEPGYARGQESQQMSTATSEQAGPAEQCRQSG) are disordered. Residues 696-708 (QESQQMSTATSEQ) are compositionally biased toward polar residues.

Belongs to the bZIP family. CNC subfamily. In terms of assembly, heterodimer of BACH1 and MAFK. Ubiquitinated by the SCF(FBXL17) complex or by the by the SCF(FBXO22) complex, leading to its degradation by the proteasome. Under oxidative stress, reactive oxygen species covalently modify cysteine residues on the bZIP domain of BACH1 and release it from chromatin. If the BTB domain of BACH1 remains intact, its beta1-alpha6 degron is recognized by FBXO22, promoting its ubiquitination and degradation. If the structural integrity of the beta1-alpha6 degron is compromised, FBXL17 will transiently associate with the BACH1 BTB dimer and remodel it into stably bound monomer for ubiquitination and degradation.

The protein resides in the nucleus. Its function is as follows. Transcriptional regulator that acts as a repressor or activator, depending on the context. Binds to NF-E2 DNA binding sites. Plays important roles in coordinating transcription activation and repression by MAFK. Together with MAF, represses the transcription of genes under the control of the NFE2L2 oxidative stress pathway. This Homo sapiens (Human) protein is Transcription regulator protein BACH1.